A 439-amino-acid polypeptide reads, in one-letter code: Cell division protein DivIB (439 aa).

Disordered regions lie at residues 1–96 (MDDK…DSNI) and 119–149 (DNEQ…KSKV). Over 1–173 (MDDKTKNDQQ…RRKRQKRIQY (173 aa)) the chain is Cytoplasmic. Residues 11-20 (ESNEDKDELE) show a composition bias toward acidic residues. The span at 26–38 (TSKKRRQRKRSKA) shows a compositional bias: basic residues. A compositionally biased stretch (basic and acidic residues) spans 64–76 (KDFKKEESNDKNN). The span at 77–86 (DSASSHANDN) shows a compositional bias: low complexity. Residues 87–96 (NIDDSTDSNI) are compositionally biased toward acidic residues. Positions 119–133 (DNEQPQSAPKEQNSD) are enriched in polar residues. The chain crosses the membrane as a helical span at residues 174 to 194 (SVITILVLLIAVILIYMFSPL). In terms of domain architecture, POTRA spans 195–263 (SKIAHVNING…NTLNVDITEN (69 aa)). Residues 195–439 (SKIAHVNING…KINKQSSKNN (245 aa)) lie on the Extracellular side of the membrane. Positions 396-439 (YRGNTSSQSESDKNVTKSSQEENQAKEELQSVLNKINKQSSKNN) are disordered. Residues 405 to 424 (ESDKNVTKSSQEENQAKEEL) are compositionally biased toward basic and acidic residues. Residues 426–439 (SVLNKINKQSSKNN) are compositionally biased toward polar residues.

This sequence belongs to the FtsQ/DivIB family. DivIB subfamily.

It is found in the cell membrane. Functionally, cell division protein that may be involved in stabilizing or promoting the assembly of the division complex. The chain is Cell division protein DivIB from Staphylococcus aureus (strain NCTC 8325 / PS 47).